The primary structure comprises 33 residues: Phosphoglycerate kinase (33 aa).

K13 lines the AMP pocket. Residue K13 coordinates ATP.

It belongs to the phosphoglycerate kinase family. As to quaternary structure, monomer. Mg(2+) is required as a cofactor.

It carries out the reaction (2R)-3-phosphoglycerate + ATP = (2R)-3-phospho-glyceroyl phosphate + ADP. The polypeptide is Phosphoglycerate kinase (Pseudotsuga menziesii (Douglas-fir)).